The chain runs to 197 residues: Small ribosomal subunit protein uS4 (197 aa).

The region spanning 87–147 (LRLDNVLFRL…EKSKSSARYK (61 aa)) is the S4 RNA-binding domain.

Belongs to the universal ribosomal protein uS4 family. As to quaternary structure, part of the 30S ribosomal subunit. Contacts protein S5. The interaction surface between S4 and S5 is involved in control of translational fidelity.

Functionally, one of the primary rRNA binding proteins, it binds directly to 16S rRNA where it nucleates assembly of the body of the 30S subunit. With S5 and S12 plays an important role in translational accuracy. The chain is Small ribosomal subunit protein uS4 from Lachnospira eligens (strain ATCC 27750 / DSM 3376 / VPI C15-48 / C15-B4) (Eubacterium eligens).